An 89-amino-acid polypeptide reads, in one-letter code: Large ribosomal subunit protein bL27 (89 aa).

Positions 1 to 20 are disordered; it reads MAHKKAGGSSRNGRDSAGKR.

Belongs to the bacterial ribosomal protein bL27 family.

The sequence is that of Large ribosomal subunit protein bL27 from Rhodopseudomonas palustris (strain HaA2).